A 494-amino-acid chain; its full sequence is BTB/POZ domain and ankyrin repeat-containing protein NH5.1 (494 aa).

One can recognise a BTB domain in the interval 25 to 130; sequence SDVAFSVEGR…LYSGQASVAA (106 aa). The segment at 60-94 is disordered; sequence NHQPPPPPPPLNWPMAGGGGGGSGGGGRGGAGGGG. The span at 61–71 shows a compositional bias: pro residues; that stretch reads HQPPPPPPPLN. Residues 75-94 show a composition bias toward gly residues; it reads AGGGGGGSGGGGRGGAGGGG. The C2HC NPR-type zinc finger occupies 136-150; it reads LPGCGARGCWHTRCG. 4 residues coordinate Zn(2+): Cys-139, Cys-144, His-146, and Cys-149. 4 ANK repeats span residues 274-302, 303-333, 338-367, and 371-405; these read NKIRRMRRALDAADIELVKLMVMGEGLDL, DDALAVHYAVQHCNRDVVKALLELGAADVNS, TGKTALHLAAEMVSPDMVSVLLDHHADPNS, and DGVTPLDVLRSLTSEFLFKGAVPGLTHIEPNKLRL. 2 disordered regions span residues 421-443 and 469-494; these read DGAPVTGGAEAGGSDGGNFPRSD and AAGEGRKSNNGRGSPPPAMYFPNGFA.

The protein belongs to the plant 'ANKYRIN-BTB/POZ' family. 'NOOT-BOP-COCH-like' (NBCL) subfamily. As to quaternary structure, homodimer. Interacts with TGAL5, TGAL7, TGAL8 and TGAL9.

It is found in the nucleus. It localises to the cytoplasm. The protein operates within protein modification; protein ubiquitination. Functionally, may act as a substrate-specific adapter of an E3 ubiquitin-protein ligase complex (CUL3-RBX1-BTB) which mediates the ubiquitination and subsequent proteasomal degradation of target proteins. Transcriptional co-regulator involved in the promotion of leaf and floral meristem fate and determinacy. Required for the abscission of senescent organs, probably by regulating the cell wall disorganization in abscission zones (AZs, e.g. pulvini at the base of leaves). The polypeptide is BTB/POZ domain and ankyrin repeat-containing protein NH5.1 (Oryza sativa subsp. japonica (Rice)).